The sequence spans 142 residues: Rhinocerosin (142 aa).

The signal sequence occupies residues 1 to 16 (MMKLYIVFGFIAFSAA). Residues 17 to 70 (YVVPEGYYEPEYYPADGYESERVARASPAELIFDEDLADEPEVEEPQYYIRTRR) constitute a propeptide that is removed on maturation. Residues 72–96 (LQPGAPNFPMPGSQLPTSITSNIEK) form a disordered region. Over residues 85 to 96 (QLPTSITSNIEK) the composition is skewed to polar residues.

It belongs to the coleoptericin family. As to expression, strongly expressed in the fat body and the Malpighian tubules, and weakly expressed in hemocytes and midgut.

The protein resides in the secreted. In terms of biological role, has strong antibacterial activity against E.coli, Streptococcus pyogenes, Staphylococcus aureus but not against Pseudomonas aeruginosa. The sequence is that of Rhinocerosin from Oryctes rhinoceros (Coconut rhinoceros beetle).